Here is a 733-residue protein sequence, read N- to C-terminus: Non-secreted LysM effector LCP1 (733 aa).

A signal peptide spans 1-22 (MMRRPWLLSALVAWVKLPSVQG). LysM domains lie at 211-256 (SEYT…KLCI) and 261-309 (DVYV…TICI). Residues Asn298, Asn304, Asn340, Asn350, Asn381, Asn432, Asn442, Asn455, and Asn538 are each glycosylated (N-linked (GlcNAc...) asparagine). The 47-residue stretch at 347–393 (LFHNVTAGDDCGTIGLKYSISLDDFIFLNSMIWPNCTNLWLRASYCV) folds into the LysM 3 domain. Over residues 605 to 629 (SPITSSAPTSTTASSKTSSSAAQPT) the composition is skewed to low complexity. The segment at 605–637 (SPITSSAPTSTTASSKTSSSAAQPTNVSTDGTC) is disordered. An N-linked (GlcNAc...) asparagine glycan is attached at Asn630. Chitin-binding type-1 domains follow at residues 634–680 (DGTC…KCDA) and 688–733 (DGTC…GVCT). Cystine bridges form between Cys637/Cys654, Cys645/Cys660, Cys653/Cys667, Cys671/Cys678, Cys691/Cys708, Cys699/Cys714, Cys707/Cys721, and Cys725/Cys732.

This sequence belongs to the secreted LysM effector family.

It localises to the secreted. The protein localises to the cell membrane. It is found in the vacuole. Functionally, secreted effector that enables the plant pathogenic fungus to manipulate host defenses for successful infection. Not involved in host recognition and penetration but suppresses host cell death and promotes fumonisin biosynthesis while the pathogen colonizes maize kernels. The chain is Non-secreted LysM effector LCP1 from Gibberella moniliformis (strain M3125 / FGSC 7600) (Maize ear and stalk rot fungus).